Reading from the N-terminus, the 196-residue chain is Charged multivesicular body protein 1a (196 aa).

The stretch at 5 to 41 (LFQLKFTAKQLEKLAKKAEKDSNTEQAKVKKALQQKN) forms a coiled coil. A compositionally biased stretch (polar residues) spans 170 to 181 (QGASSVGESSTR). The segment at 170 to 196 (QGASSVGESSTRTQEDQLSRRLASLRN) is disordered. Positions 185–195 (DQLSRRLASLR) match the MIT-interacting motif motif.

The protein belongs to the SNF7 family. Probable peripherally associated component of the endosomal sorting required for transport complex III (ESCRT-III).

It is found in the cytoplasm. The protein resides in the endosome membrane. Probable peripherally associated component of the endosomal sorting required for transport complex III (ESCRT-III) which is involved in multivesicular bodies (MVBs) formation and sorting of endosomal cargo proteins into MVBs. MVBs contain intraluminal vesicles (ILVs) that are generated by invagination and scission from the limiting membrane of the endosome and mostly are delivered to lysosomes enabling degradation of membrane proteins, such as stimulated growth factor receptors, lysosomal enzymes and lipids. This Xenopus laevis (African clawed frog) protein is Charged multivesicular body protein 1a (chmp1a).